A 268-amino-acid chain; its full sequence is GTP cyclohydrolase FolE2 (268 aa).

It belongs to the GTP cyclohydrolase IV family.

It carries out the reaction GTP + H2O = 7,8-dihydroneopterin 3'-triphosphate + formate + H(+). It participates in cofactor biosynthesis; 7,8-dihydroneopterin triphosphate biosynthesis; 7,8-dihydroneopterin triphosphate from GTP: step 1/1. Converts GTP to 7,8-dihydroneopterin triphosphate. In Ralstonia nicotianae (strain ATCC BAA-1114 / GMI1000) (Ralstonia solanacearum), this protein is GTP cyclohydrolase FolE2.